The sequence spans 179 residues: Gamma-glutamyl cyclotransferase verK (179 aa).

Belongs to the class-I pyridoxal-phosphate-dependent aminotransferase family.

The catalysed reaction is an alpha-(gamma-L-glutamyl)-L-amino acid = 5-oxo-L-proline + an L-alpha-amino acid. It participates in mycotoxin biosynthesis. In terms of biological role, gamma-glutamyl cyclotransferase; part of the gene cluster that mediates the biosynthesis of 11'-deoxyverticillin A, one of the dimeric epipolythiodioxopiperazines (ETPs) from the verticillin family that act as mycotoxins. 11'-deoxyverticillin A is required for normal conidiation. The nonribosomal peptide synthetase verP is speculated to be responsible for condensation of amino acids to form the carbon skeleton of verticillin, whereas the cluster-specific tailoring enzymes are involved in further modifications leading to the production of 11'-deoxyverticillin A. In Clonostachys rogersoniana, this protein is Gamma-glutamyl cyclotransferase verK.